A 278-amino-acid chain; its full sequence is Nucleotide-binding protein Tlet_0523 (278 aa).

9–16 is a binding site for ATP; it reads GLSGAGKS. 58–61 contacts GTP; it reads DIRS.

This sequence belongs to the RapZ-like family.

Its function is as follows. Displays ATPase and GTPase activities. The sequence is that of Nucleotide-binding protein Tlet_0523 from Pseudothermotoga lettingae (strain ATCC BAA-301 / DSM 14385 / NBRC 107922 / TMO) (Thermotoga lettingae).